The chain runs to 602 residues: MNHIRNFSIIAHIDHGKSTLADRIIQRCGGLADREMEAQVLDSMDIEKERGITIKAQTAALQYKARDGKVYNLNLIDTPGHVDFSYEVSRSLSACEGALLVVDASQGVEAQTVANCYTALDLGVEVLPVLNKMDLPQADPDTAKAEIEDVIGIDASEAIAISAKTGMGIDDVLEQIVAKVPAPRGKPDAPLRAMIIDSWFDSYVGVVMLVRVVDGRLQKGERFKMMASGAAYEANNLGVFTPAQQSRDALEAGEVGYIIAGIKELKAAKVGDTITLEKKLPNNLGPATEALPGFKEIQPQVFAGLYPTEANQYDALRDALEKLQLNDASLHFEPEVSQALGFGFRCGFLGLLHMEIVQERLEREFDQDLITTAPSVVYEVVKGDGEVIMVENPSKMPDQGKIQEIREPIVTVHLYMPQDYVGPVMTLANQKRGVQMNMQYHGRQVMLTYELPLGEIVLDFFDKLKSVSRGYASMDYEFKEYRPSDVVKVDILLNGEKVDALSIIVHRSQSQYRGRAVAAKMREIISRQMFDVAIQAAIGANIIARETIKALRKNVLAKCYGGDITRKRKLLEKQKAGKKRMKQIGSVEVPQEAFLAILQVED.

In terms of domain architecture, tr-type G spans 2–184; it reads NHIRNFSIIA…QIVAKVPAPR (183 aa). Residues 14-19 and 131-134 each bind GTP; these read DHGKST and NKMD.

It belongs to the TRAFAC class translation factor GTPase superfamily. Classic translation factor GTPase family. LepA subfamily.

It is found in the cell inner membrane. It carries out the reaction GTP + H2O = GDP + phosphate + H(+). Its function is as follows. Required for accurate and efficient protein synthesis under certain stress conditions. May act as a fidelity factor of the translation reaction, by catalyzing a one-codon backward translocation of tRNAs on improperly translocated ribosomes. Back-translocation proceeds from a post-translocation (POST) complex to a pre-translocation (PRE) complex, thus giving elongation factor G a second chance to translocate the tRNAs correctly. Binds to ribosomes in a GTP-dependent manner. The polypeptide is Elongation factor 4 (Acidovorax ebreus (strain TPSY) (Diaphorobacter sp. (strain TPSY))).